Consider the following 261-residue polypeptide: MRIALGIEYDGNGYFGWQRQAEVDSVQAQLERALSIVANEPIGVFCAGRTDAGVHATGQVVHFETNAIRNEGAWTLGVNANLPDNIAVRWVKEVDDSFHARFSATARRYRYVIYNHSFRPGILRHGVSHYHGDIDADRMHQAAQALLGEQDFTSFRAVQCQSKTPFRNVHCVNVTRQGMYVIVDIAANAFLHHMVRNIVGSLLEIGLGNQPLTWMGDLLALKDRNQAAATAKPHGLYLVDVTYPEQYQLPKLALGPLFMLD.

Asp-51 functions as the Nucleophile in the catalytic mechanism. Residue Tyr-109 coordinates substrate.

This sequence belongs to the tRNA pseudouridine synthase TruA family. Homodimer.

The enzyme catalyses uridine(38/39/40) in tRNA = pseudouridine(38/39/40) in tRNA. Functionally, formation of pseudouridine at positions 38, 39 and 40 in the anticodon stem and loop of transfer RNAs. The sequence is that of tRNA pseudouridine synthase A from Shewanella baltica (strain OS195).